Reading from the N-terminus, the 413-residue chain is Putative glutamate synthase [NADPH] small chain (413 aa).

The [4Fe-4S] cluster site is built by C33, C37, C43, and C47.

As to quaternary structure, aggregate of 4 catalytic active heterodimers, consisting of a large and a small subunit. The cofactor is [4Fe-4S] cluster.

It carries out the reaction 2 L-glutamate + NADP(+) = L-glutamine + 2-oxoglutarate + NADPH + H(+). The protein operates within amino-acid biosynthesis; L-glutamate biosynthesis via GLT pathway; L-glutamate from 2-oxoglutarate and L-glutamine (NADP(+) route): step 1/1. It participates in energy metabolism; nitrogen metabolism. The sequence is that of Putative glutamate synthase [NADPH] small chain (gltD) from Cereibacter sphaeroides (Rhodobacter sphaeroides).